A 122-amino-acid polypeptide reads, in one-letter code: Acyl carrier protein 1, mitochondrial (122 aa).

The transit peptide at 1-34 (MALRNAILRHLRVPVQTLGLNQSKIGFLGTIRSF) directs the protein to the mitochondrion. In terms of domain architecture, Carrier spans 44 to 119 (EAVVDRVLDV…LAIEYVYNHP (76 aa)). Serine 79 is subject to O-(pantetheine 4'-phosphoryl)serine.

The protein belongs to the acyl carrier protein (ACP) family. As to quaternary structure, complex I is composed of at least 49 different subunits. In terms of processing, 4'-phosphopantetheine is transferred from CoA to a specific serine of the apo-ACP-like protein.

Its subcellular location is the mitochondrion. The protein operates within lipid metabolism; fatty acid biosynthesis. Its function is as follows. Carrier of the growing fatty acid chain in fatty acid biosynthesis. May be involved in the synthesis of short and medium chain fatty acids. Accessory and non-catalytic subunit of the mitochondrial membrane respiratory chain NADH dehydrogenase (Complex I), which functions in the transfer of electrons from NADH to the respiratory chain. The sequence is that of Acyl carrier protein 1, mitochondrial (MTACP1) from Arabidopsis thaliana (Mouse-ear cress).